The primary structure comprises 373 residues: Flagellar P-ring protein 1 (373 aa).

The first 25 residues, 1-25 (MKPINTFFSSFLLALTLGLPATSQA), serve as a signal peptide directing secretion.

This sequence belongs to the FlgI family. As to quaternary structure, the basal body constitutes a major portion of the flagellar organelle and consists of four rings (L,P,S, and M) mounted on a central rod.

The protein localises to the periplasm. It localises to the bacterial flagellum basal body. Functionally, assembles around the rod to form the L-ring and probably protects the motor/basal body from shearing forces during rotation. This chain is Flagellar P-ring protein 1, found in Vibrio parahaemolyticus serotype O3:K6 (strain RIMD 2210633).